Reading from the N-terminus, the 727-residue chain is Ankyrin repeat domain-containing protein 6 (727 aa).

ANK repeat units follow at residues Ala-9 to Val-38, His-41 to Val-70, Gly-74 to Arg-103, Asp-107 to Ala-136, Ala-140 to Leu-169, Ala-173 to Glu-202, Ala-206 to Ile-235, and Ala-239 to Phe-268. Positions Lys-277 to His-386 are disordered. Residues Arg-280 to Ala-296 show a composition bias toward basic and acidic residues. Residues Ser-298–Gln-312 show a composition bias toward polar residues. The span at Val-314–Phe-324 shows a compositional bias: basic and acidic residues. Positions Lys-363–Cys-379 are enriched in basic residues. A coiled-coil region spans residues Leu-417 to Lys-446. A compositionally biased stretch (low complexity) spans Pro-548–Pro-557. Disordered regions lie at residues Pro-548–Ser-586 and Asn-601–His-657. A compositionally biased stretch (polar residues) spans Leu-566 to Thr-584. A compositionally biased stretch (basic residues) spans Lys-622–Ala-633. Residues Trp-682–Asn-727 adopt a coiled-coil conformation.

Interacts with AXN1, AXN2 and CSNK1E/CKI-epsilon.

Its function is as follows. Recruits CKI-epsilon to the beta-catenin degradation complex that consists of AXN1 or AXN2 and GSK3-beta and allows efficient phosphorylation of beta-catenin, thereby inhibiting beta-catenin/Tcf signals. The chain is Ankyrin repeat domain-containing protein 6 (ANKRD6) from Homo sapiens (Human).